Consider the following 77-residue polypeptide: U9-lycotoxin-Ls1a (77 aa).

The N-terminal stretch at 1-20 (MKLLLFTALVLVVIVSLIEA) is a signal peptide. Residues 21 to 26 (EAENER) constitute a propeptide that is removed on maturation.

It belongs to the neurotoxin 19 (CSTX) family. 08 (U8-Lctx) subfamily. Post-translationally, contains 4 disulfide bonds. Expressed by the venom gland.

Its subcellular location is the secreted. The chain is U9-lycotoxin-Ls1a from Lycosa singoriensis (Wolf spider).